Consider the following 335-residue polypeptide: Protein-arginine kinase (335 aa).

Residues 21-244 (VIISSRIRLA…NQIINEEKQI (224 aa)) enclose the Phosphagen kinase C-terminal domain. ATP is bound by residues 24 to 28 (SSRIR), His82, Arg115, 166 to 170 (RASVM), and 197 to 202 (RGIYGE).

The protein belongs to the ATP:guanido phosphotransferase family.

The catalysed reaction is L-arginyl-[protein] + ATP = N(omega)-phospho-L-arginyl-[protein] + ADP + H(+). Its function is as follows. Catalyzes the specific phosphorylation of arginine residues in proteins. In Staphylococcus epidermidis (strain ATCC 12228 / FDA PCI 1200), this protein is Protein-arginine kinase.